A 250-amino-acid chain; its full sequence is Membrane-spanning 4-domains subfamily A member 8 (250 aa).

Residues methionine 1–alanine 74 are Cytoplasmic-facing. Residues isoleucine 75–valine 95 form a helical membrane-spanning segment. Over glycine 96–tyrosine 98 the chain is Extracellular. The chain crosses the membrane as a helical span at residues leucine 99–glycine 119. Residues serine 120 to serine 136 lie on the Cytoplasmic side of the membrane. The chain crosses the membrane as a helical span at residues glycine 137 to isoleucine 157. The Extracellular segment spans residues threonine 158–proline 180. The helical transmembrane segment at glycine 181 to alanine 201 threads the bilayer. At serine 202 to lysine 250 the chain is on the cytoplasmic side.

The protein belongs to the MS4A family. Expressed by hematopoietic tissues and cells lines.

It is found in the membrane. May be involved in signal transduction as a component of a multimeric receptor complex. The chain is Membrane-spanning 4-domains subfamily A member 8 (MS4A8) from Homo sapiens (Human).